The primary structure comprises 249 residues: 2,3-bisphosphoglycerate-dependent phosphoglycerate mutase (249 aa).

Substrate is bound by residues 9–16 (RHGQSQWN), 22–23 (TG), Arg-61, 88–91 (ERHY), Lys-99, 115–116 (RR), and 184–185 (GN). His-10 functions as the Tele-phosphohistidine intermediate in the catalytic mechanism. Glu-88 functions as the Proton donor/acceptor in the catalytic mechanism.

It belongs to the phosphoglycerate mutase family. BPG-dependent PGAM subfamily. In terms of assembly, homodimer.

It catalyses the reaction (2R)-2-phosphoglycerate = (2R)-3-phosphoglycerate. It functions in the pathway carbohydrate degradation; glycolysis; pyruvate from D-glyceraldehyde 3-phosphate: step 3/5. Catalyzes the interconversion of 2-phosphoglycerate and 3-phosphoglycerate. The sequence is that of 2,3-bisphosphoglycerate-dependent phosphoglycerate mutase from Stenotrophomonas maltophilia (strain K279a).